The primary structure comprises 260 residues: UPF0246 protein Bmul_1054/BMULJ_02209 (260 aa).

It belongs to the UPF0246 family.

The sequence is that of UPF0246 protein Bmul_1054/BMULJ_02209 from Burkholderia multivorans (strain ATCC 17616 / 249).